The following is a 328-amino-acid chain: Phosphate acetyltransferase (328 aa).

Belongs to the phosphate acetyltransferase and butyryltransferase family.

The protein localises to the cytoplasm. It catalyses the reaction acetyl-CoA + phosphate = acetyl phosphate + CoA. It participates in metabolic intermediate biosynthesis; acetyl-CoA biosynthesis; acetyl-CoA from acetate: step 2/2. This chain is Phosphate acetyltransferase (pta), found in Thermoanaerobacterium thermosaccharolyticum (strain ATCC 7956 / DSM 571 / NCIMB 9385 / NCA 3814 / NCTC 13789 / WDCM 00135 / 2032) (Clostridium thermosaccharolyticum).